The sequence spans 263 residues: Lens fiber major intrinsic protein (263 aa).

Over 1–9 (MWELRSASF) the chain is Cytoplasmic. A helical transmembrane segment spans residues 10–29 (WRAIFAEFFATLFYVFFGLG). The Extracellular portion of the chain corresponds to 30-41 (ASLRWAPGPLHV). Residues 42–59 (LQVALAFGLALATLVQAV) form a helical membrane-spanning segment. The Cytoplasmic portion of the chain corresponds to 60-61 (GH). The segment at residues 62–77 (ISGAHVNPAVTFAFLV) is an intramembrane region (discontinuously helical). The short motif at 68–70 (NPA) is the NPA 1 element. Over 78 to 82 (GSQMS) the chain is Cytoplasmic. A helical transmembrane segment spans residues 83 to 106 (LLRAICYMAAQLLGAVAGAAVLYS). Topologically, residues 107-127 (VTPAAVRGNLALNTLHPGVSL) are extracellular. The helical transmembrane segment at 128-148 (GQATTVEIFLTLQFVLCIFAT) threads the bilayer. The Cytoplasmic segment spans residues 149–156 (YDERRNGR). A helical transmembrane segment spans residues 157-175 (LGSVALAVGFSLTLGHLFG). At 176–178 (MYY) the chain is on the extracellular side. An intramembrane region (discontinuously helical) is located at residues 179–193 (TGAGMNPARSFAPAI). An NPA 2 motif is present at residues 184 to 186 (NPA). Topologically, residues 194 to 200 (LTRNFTN) are extracellular. A helical membrane pass occupies residues 201-222 (HWVYWVGPIIGGGLASLLYDFL). Residues 223 to 263 (LFPRLKSVSERLSILKGARPSDSNGQPEGTGEPVELKTQAL) are Cytoplasmic-facing. Residues 227 to 237 (LKSVSERLSIL) are interaction with CALM. Ser-235, Ser-243, and Ser-245 each carry phosphoserine. Residues 240-263 (ARPSDSNGQPEGTGEPVELKTQAL) are disordered. Position 246 is a deamidated asparagine (Asn-246).

The protein belongs to the MIP/aquaporin (TC 1.A.8) family. Homotetramer; each monomer provides an independent water pore. Two homotetramers on opposing membranes can dimerize, forming a cell-cell junction. Interacts with CALM; the calcium-calmodulin/CALM complex interacts with the cytoplasmic domains of two aquaporins, leading to channel closure. Interacts with BFSP1 (via C-terminus); prevents calcium-dependent inhibition of the water channel activity. Post-translationally, subject to partial proteolytic cleavage in the eye lens core. Partial proteolysis promotes interactions between tetramers from adjoining membranes. In terms of processing, fatty acylated at Met-1 and Lys-238. The acyl modifications, in decreasing order of ion abundance, are: oleoyl (C18:1) &gt; palmitoyl (C16:0) &gt; stearoyl (C18:0) &gt; eicosenoyl (C20:1) &gt; dihomo-gamma-linolenoyl (C20:3) &gt; palmitoleoyl (C16:1) &gt; eicosadienoyl (C20:2).

The protein localises to the cell membrane. It is found in the cell junction. The catalysed reaction is H2O(in) = H2O(out). The water channel activity is inhibited by calcium through calmodulin/CALM. Functionally, aquaporins form homotetrameric transmembrane channels, with each monomer independently mediating water transport across the plasma membrane along its osmotic gradient. Specifically expressed in lens fiber cells, this aquaporin is crucial for maintaining lens water homeostasis and transparency. Beyond water permeability, it also acts as a cell-to-cell adhesion molecule, forming thin junctions between lens fiber cells that are essential for maintaining the ordered structure and transparency of the lens. This chain is Lens fiber major intrinsic protein, found in Oryctolagus cuniculus (Rabbit).